The sequence spans 45 residues: MRVSSSIKADPSKGDKLVRRKGRLYVINKKDPNRKQRQAGPARKK.

Positions 1 to 45 are disordered; the sequence is MRVSSSIKADPSKGDKLVRRKGRLYVINKKDPNRKQRQAGPARKK.

The protein belongs to the bacterial ribosomal protein bL36 family.

The chain is Large ribosomal subunit protein bL36 from Chlamydia trachomatis serovar L2 (strain ATCC VR-902B / DSM 19102 / 434/Bu).